A 499-amino-acid chain; its full sequence is Glutathione reductase, cytosolic (499 aa).

The FAD site is built by S35, G36, E55, T72, C73, and K81. S35 is a binding site for glutathione. The cysteines at positions 73 and 78 are disulfide-linked. Y130 contacts glutathione. G146 contacts FAD. G211, I214, E217, R234, R240, and G297 together coordinate NADP(+). The FAD site is built by D338 and T346. A376 serves as a coordination point for NADP(+). H472 provides a ligand contact to FAD. Catalysis depends on H472, which acts as the Proton acceptor.

Belongs to the class-I pyridine nucleotide-disulfide oxidoreductase family. In terms of assembly, homodimer. FAD is required as a cofactor.

It is found in the cytoplasm. The enzyme catalyses 2 glutathione + NADP(+) = glutathione disulfide + NADPH + H(+). Catalyzes the reduction of glutathione disulfide (GSSG) to reduced glutathione (GSH). Constitutes the major mechanism to maintain a high GSH:GSSG ratio in the cytosol. The sequence is that of Glutathione reductase, cytosolic from Arabidopsis thaliana (Mouse-ear cress).